Reading from the N-terminus, the 353-residue chain is Uroporphyrinogen decarboxylase (353 aa).

Substrate contacts are provided by residues 33-37 (RQAGR), Asp82, Tyr158, Ser213, and His332.

This sequence belongs to the uroporphyrinogen decarboxylase family. In terms of assembly, homodimer.

It is found in the cytoplasm. It catalyses the reaction uroporphyrinogen III + 4 H(+) = coproporphyrinogen III + 4 CO2. The protein operates within porphyrin-containing compound metabolism; protoporphyrin-IX biosynthesis; coproporphyrinogen-III from 5-aminolevulinate: step 4/4. Functionally, catalyzes the decarboxylation of four acetate groups of uroporphyrinogen-III to yield coproporphyrinogen-III. This Gluconobacter oxydans (strain 621H) (Gluconobacter suboxydans) protein is Uroporphyrinogen decarboxylase.